The chain runs to 513 residues: ATP synthase subunit alpha (513 aa).

169 to 176 serves as a coordination point for ATP; it reads GDRQTGKT.

Belongs to the ATPase alpha/beta chains family. F-type ATPases have 2 components, CF(1) - the catalytic core - and CF(0) - the membrane proton channel. CF(1) has five subunits: alpha(3), beta(3), gamma(1), delta(1), epsilon(1). CF(0) has three main subunits: a(1), b(2) and c(9-12). The alpha and beta chains form an alternating ring which encloses part of the gamma chain. CF(1) is attached to CF(0) by a central stalk formed by the gamma and epsilon chains, while a peripheral stalk is formed by the delta and b chains.

It is found in the cell inner membrane. The enzyme catalyses ATP + H2O + 4 H(+)(in) = ADP + phosphate + 5 H(+)(out). Functionally, produces ATP from ADP in the presence of a proton gradient across the membrane. The alpha chain is a regulatory subunit. In Klebsiella pneumoniae subsp. pneumoniae (strain ATCC 700721 / MGH 78578), this protein is ATP synthase subunit alpha.